The primary structure comprises 327 residues: Alkene monooxygenase system, ferredoxin--NAD(+) reductase component (327 aa).

Positions Met1–Asp89 constitute a 2Fe-2S ferredoxin-type domain. Positions 32, 37, 40, and 73 each coordinate [2Fe-2S] cluster. The FAD-binding FR-type domain maps to Pro96–Arg194.

The protein belongs to the bacterial ring-hydroxylating dioxygenase ferredoxin reductase family. In terms of assembly, monomer. The alkene monooxygenase multicomponent enzyme system is composed of an electron transfer component and a monooxygenase component interacting with the effector protein XamoD. The electron transfer component is composed of a ferredoxin reductase (XamoF) and a ferredoxin (XamoC), and the monooxygenase component is formed by a heterohexamer (dimer of heterotrimers) of two alpha subunits (XamoA), two beta subunits (XamoE) and two gamma subunits (XamoB). It depends on FAD as a cofactor. Requires [2Fe-2S] cluster as cofactor.

The protein resides in the cytoplasm. The catalysed reaction is 2 reduced [2Fe-2S]-[ferredoxin] + NAD(+) + H(+) = 2 oxidized [2Fe-2S]-[ferredoxin] + NADH. Functionally, reductase component of the alkene monooxygenase multicomponent enzyme system which catalyzes the O2- and NADH-dependent epoxidation of short chain (C2 to C6) alkenes to their corresponding epoxides. Ferredoxin reductase catalyzes the transfer of electrons from NADH to ferredoxin (XamoC). NADPH is also effective but with a rate approximately 3-fold lower than with NADH. The protein is Alkene monooxygenase system, ferredoxin--NAD(+) reductase component of Xanthobacter autotrophicus (strain ATCC BAA-1158 / Py2).